The chain runs to 316 residues: uncharacterized protein (316 aa).

Transmembrane regions (helical) follow at residues 74–94, 99–119, 166–186, and 188–208; these read IPVLGLLTVLPLGLFIFGMAI, WPYAALLVFLLFLFTLLIFLG, MAGCAVPFFAGVGTLLGTVLG, and VEGFVGAVPGAAIGAMAGYIF.

The protein localises to the cell membrane. This is an uncharacterized protein from Synechocystis sp. (strain ATCC 27184 / PCC 6803 / Kazusa).